We begin with the raw amino-acid sequence, 510 residues long: 2,3-bisphosphoglycerate-independent phosphoglycerate mutase (510 aa).

Residues D13 and S63 each contribute to the Mn(2+) site. S63 serves as the catalytic Phosphoserine intermediate. Substrate-binding positions include H124, 154–155 (RD), R186, R192, 262–265 (RADR), and K334. Mn(2+)-binding residues include D401, H405, D442, H443, and H461.

This sequence belongs to the BPG-independent phosphoglycerate mutase family. As to quaternary structure, monomer. The cofactor is Mn(2+).

It carries out the reaction (2R)-2-phosphoglycerate = (2R)-3-phosphoglycerate. It participates in carbohydrate degradation; glycolysis; pyruvate from D-glyceraldehyde 3-phosphate: step 3/5. In terms of biological role, catalyzes the interconversion of 2-phosphoglycerate and 3-phosphoglycerate. The chain is 2,3-bisphosphoglycerate-independent phosphoglycerate mutase from Vibrio campbellii (strain ATCC BAA-1116).